The following is a 260-amino-acid chain: Protein-L-isoaspartate O-methyltransferase (260 aa).

Residues 1-27 (MKSPVAGAVLDPSTPPPTTGTSWRWPG) form a disordered region. Ser92 is a catalytic residue.

The protein belongs to the methyltransferase superfamily. L-isoaspartyl/D-aspartyl protein methyltransferase family.

Its subcellular location is the cytoplasm. The catalysed reaction is [protein]-L-isoaspartate + S-adenosyl-L-methionine = [protein]-L-isoaspartate alpha-methyl ester + S-adenosyl-L-homocysteine. Catalyzes the methyl esterification of L-isoaspartyl residues in peptides and proteins that result from spontaneous decomposition of normal L-aspartyl and L-asparaginyl residues. It plays a role in the repair and/or degradation of damaged proteins. The protein is Protein-L-isoaspartate O-methyltransferase (pcm) of Aeropyrum pernix (strain ATCC 700893 / DSM 11879 / JCM 9820 / NBRC 100138 / K1).